The following is a 132-amino-acid chain: Small ribosomal subunit protein uS11 (132 aa).

This sequence belongs to the universal ribosomal protein uS11 family. Part of the 30S ribosomal subunit. Interacts with proteins S7 and S18. Binds to IF-3.

Located on the platform of the 30S subunit, it bridges several disparate RNA helices of the 16S rRNA. Forms part of the Shine-Dalgarno cleft in the 70S ribosome. The polypeptide is Small ribosomal subunit protein uS11 (Cyanothece sp. (strain PCC 7425 / ATCC 29141)).